The following is a 251-amino-acid chain: Hydroxyacylglutathione hydrolase (251 aa).

7 residues coordinate Zn(2+): His-53, His-55, Asp-57, His-58, His-110, Asp-127, and His-165.

This sequence belongs to the metallo-beta-lactamase superfamily. Glyoxalase II family. As to quaternary structure, monomer. The cofactor is Zn(2+).

The catalysed reaction is an S-(2-hydroxyacyl)glutathione + H2O = a 2-hydroxy carboxylate + glutathione + H(+). The protein operates within secondary metabolite metabolism; methylglyoxal degradation; (R)-lactate from methylglyoxal: step 2/2. In terms of biological role, thiolesterase that catalyzes the hydrolysis of S-D-lactoyl-glutathione to form glutathione and D-lactic acid. The polypeptide is Hydroxyacylglutathione hydrolase (Shigella boydii serotype 4 (strain Sb227)).